The sequence spans 2085 residues: Protein MLP1 homolog (2085 aa).

Coiled coils occupy residues Lys-44–Gly-367, Lys-399–Ile-513, Tyr-568–Ser-630, Ala-675–Gln-1205, Leu-1232–Glu-1667, and Glu-1744–Glu-1799. Positions His-365–Gly-398 are disordered. A disordered region spans residues Ala-934–Ser-953. Residues Glu-1159 to Gln-1166 carry the Nuclear localization signal motif. Residues Leu-1482–Gln-1503 show a composition bias toward polar residues. Disordered stretches follow at residues Leu-1482–Ser-1514 and Ser-1567–Arg-1591. Residues Pro-1504–Ser-1514 are compositionally biased toward low complexity. The segment covering Ala-1574–Ala-1584 has biased composition (polar residues). A disordered region spans residues Lys-1816–Gln-2085. Positions Pro-1817 to Ala-1827 are enriched in pro residues. Low complexity-rich tracts occupy residues Val-1843–Ser-1858, Gln-1910–Ala-1974, and Ala-1982–Arg-1994. The span at Gly-1995 to Gly-2016 shows a compositional bias: gly residues. Positions Gly-2028 to Ala-2040 are enriched in low complexity. Composition is skewed to gly residues over residues Gly-2041–Asn-2051 and Gly-2076–Gln-2085.

In terms of assembly, the nuclear pore complex (NPC) constitutes the exclusive means of nucleocytoplasmic transport. NPCs allow the passive diffusion of ions and small molecules and the active, nuclear transport receptor-mediated bidirectional transport of macromolecules such as proteins, RNAs, ribonucleoparticles (RNPs), and ribosomal subunits across the nuclear envelope. The 55-60 MDa NPC is composed of at least 28 different subunits: AMO1, ELYS, GLE1, GLE2, MLP1, NDC1, NIC96, NSP1, NUP133, NUP145, NUP152, NUP159, NUP170, NUP188, NUP192, NUP37, NUP49, NUP53, NUP56, NUP57, NUP82, NUP84, NUP85, POM152, POM33, POM34, SEC13 and SEH1. Due to its 8-fold rotational symmetry, all subunits are present with 8 copies or multiples thereof.

The protein localises to the nucleus. Involved in the structural and functional organization of perinuclear chromatin. Associates with the nuclear pore complex and form filamentous structures along the nuclear periphery. The protein is Protein MLP1 homolog (MLP1) of Chaetomium thermophilum (strain DSM 1495 / CBS 144.50 / IMI 039719) (Thermochaetoides thermophila).